The sequence spans 326 residues: UDP-3-O-acylglucosamine N-acyltransferase (326 aa).

The active-site Proton acceptor is His-225.

The protein belongs to the transferase hexapeptide repeat family. LpxD subfamily. Homotrimer.

It catalyses the reaction a UDP-3-O-[(3R)-3-hydroxyacyl]-alpha-D-glucosamine + a (3R)-hydroxyacyl-[ACP] = a UDP-2-N,3-O-bis[(3R)-3-hydroxyacyl]-alpha-D-glucosamine + holo-[ACP] + H(+). The protein operates within bacterial outer membrane biogenesis; LPS lipid A biosynthesis. Its function is as follows. Catalyzes the N-acylation of UDP-3-O-acylglucosamine using 3-hydroxyacyl-ACP as the acyl donor. Is involved in the biosynthesis of lipid A, a phosphorylated glycolipid that anchors the lipopolysaccharide to the outer membrane of the cell. The chain is UDP-3-O-acylglucosamine N-acyltransferase from Acidovorax ebreus (strain TPSY) (Diaphorobacter sp. (strain TPSY)).